The primary structure comprises 219 residues: Elongation factor Ts (219 aa).

The involved in Mg(2+) ion dislocation from EF-Tu stretch occupies residues 82–85; that stretch reads TDFV.

The protein belongs to the EF-Ts family.

It is found in the cytoplasm. Functionally, associates with the EF-Tu.GDP complex and induces the exchange of GDP to GTP. It remains bound to the aminoacyl-tRNA.EF-Tu.GTP complex up to the GTP hydrolysis stage on the ribosome. The sequence is that of Elongation factor Ts from Anaeromyxobacter sp. (strain Fw109-5).